We begin with the raw amino-acid sequence, 243 residues long: Pyridoxine 5'-phosphate synthase (243 aa).

A 3-amino-2-oxopropyl phosphate-binding site is contributed by asparagine 9. 1-deoxy-D-xylulose 5-phosphate is bound at residue 11-12 (DH). Arginine 20 serves as a coordination point for 3-amino-2-oxopropyl phosphate. Histidine 45 functions as the Proton acceptor in the catalytic mechanism. 1-deoxy-D-xylulose 5-phosphate is bound by residues arginine 47 and histidine 52. The Proton acceptor role is filled by glutamate 72. A 1-deoxy-D-xylulose 5-phosphate-binding site is contributed by threonine 102. Histidine 193 acts as the Proton donor in catalysis. 3-amino-2-oxopropyl phosphate is bound by residues glycine 194 and 215 to 216 (GH).

The protein belongs to the PNP synthase family. As to quaternary structure, homooctamer; tetramer of dimers.

The protein resides in the cytoplasm. It catalyses the reaction 3-amino-2-oxopropyl phosphate + 1-deoxy-D-xylulose 5-phosphate = pyridoxine 5'-phosphate + phosphate + 2 H2O + H(+). It participates in cofactor biosynthesis; pyridoxine 5'-phosphate biosynthesis; pyridoxine 5'-phosphate from D-erythrose 4-phosphate: step 5/5. Catalyzes the complicated ring closure reaction between the two acyclic compounds 1-deoxy-D-xylulose-5-phosphate (DXP) and 3-amino-2-oxopropyl phosphate (1-amino-acetone-3-phosphate or AAP) to form pyridoxine 5'-phosphate (PNP) and inorganic phosphate. This Yersinia pestis protein is Pyridoxine 5'-phosphate synthase.